The primary structure comprises 1480 residues: Heme-responsive zinc finger transcription factor HAP1 (1480 aa).

A compositionally biased stretch (polar residues) spans 1–50 (MSNTPYNSSVPSIASMTQSSVSRSPNMHTATTPGANTSSNSPPLHMSSDS). Positions 1-56 (MSNTPYNSSVPSIASMTQSSVSRSPNMHTATTPGANTSSNSPPLHMSSDSSKIKRK) are disordered. Residues C64, C67, C74, C81, C84, and C93 each coordinate Zn(2+). The zn(2)-C6 fungal-type DNA-binding region spans 64–93 (CTICRKRKVKCDKLRPHCQQCTKTGVAHLC). Residues 105–134 (EKELLKDNELKKLRERVKSLEKTLSKVHSS) adopt a coiled-coil conformation. The interval 126–208 (KTLSKVHSSP…ANSSSLSISN (83 aa)) is disordered. The span at 130–142 (KVHSSPSSNSLKS) shows a compositional bias: low complexity. 2 stretches are compositionally biased toward polar residues: residues 143–152 (YNTPESSNLF) and 160–176 (TLVNANTGSASSASHMH). Over residues 177 to 208 (QQQQQQQQQEQQQDFSRSANANANSSSLSISN) the composition is skewed to low complexity. The interval 244 to 441 (KGDPYLKLLW…NTIPHHQPQS (198 aa)) is heme-responsive; required for HMC formation. HRM repeat units lie at residues 280–285 (KCPINH), 296–301 (KCPVDH), 320–325 (KCPVDH), 344–349 (RCPVDH), 386–391 (KCPVDH), and 412–417 (RCPIDH). 2 stretches are compositionally biased toward polar residues: residues 429–444 (STHNTIPHHQPQSGSH) and 703–731 (QLNATIPATSQDVSNNGSKKANPSTNPTL). Disordered stretches follow at residues 429 to 456 (STHNTIPHHQPQSGSHARSHPAQSRKHD) and 703 to 764 (QLNA…KENQ). The span at 732-756 (NNNMSAATTNSSSRSGSADSRSGSN) shows a compositional bias: low complexity. The HRM 7 repeat unit spans residues 1189–1194 (KCPVYQ). The interval 1381–1408 (TANTDTSANGSALSTLTSPQGSDLASNS) is disordered. Over residues 1385 to 1408 (DTSANGSALSTLTSPQGSDLASNS) the composition is skewed to polar residues.

As to quaternary structure, binds DNA as a homodimer. Interacts with SRO9 and YDJ1. In the absence of heme, binds to at least four cellular proteins, including YDJ1 and SRO9, forming a high-molecular-weight complex (HMC) which results in repression of its activity and dictates its DNA-binding specificity.

Its subcellular location is the nucleus. Regulation of oxygen dependent gene expression. It modulates the expression of Iso-1 (CYP1) and Iso-2 (CYP3) cytochrome c. In response to heme, promotes transcription of genes encoding functions required for respiration, controlling oxidative damage and repression of anaerobic genes. Binds to the sequence 5'-CGGNNNTNNCGG-3'. Is non-functional in terms of iso-1 cytochrome c expression in strain S288c and its derivatives. This is Heme-responsive zinc finger transcription factor HAP1 (HAP1) from Saccharomyces cerevisiae (strain Kyokai no. 7 / NBRC 101557) (Baker's yeast).